A 638-amino-acid chain; its full sequence is uncharacterized protein (638 aa).

The N-terminal stretch at 1–31 (MKFIKFNDSTIDSFLFMMLTDLAKTLTKSEA) is a signal peptide. Basic and acidic residues-rich tracts occupy residues 247 to 256 (EEKKAPKLSD), 273 to 284 (EEMPTWHRETEA), 301 to 310 (DLGKDASREG), and 329 to 342 (RKDY…ESQK). Disordered regions lie at residues 247-285 (EEKK…TEAP) and 301-354 (DLGK…ADGK). A VWFA domain is found at 445–632 (FTLLVDCSAS…DVLYPLLKKL (188 aa)).

This is an uncharacterized protein from Bacillus subtilis (strain 168).